The primary structure comprises 189 residues: Elongation factor P 2 (189 aa).

It belongs to the elongation factor P family.

The protein localises to the cytoplasm. The protein operates within protein biosynthesis; polypeptide chain elongation. Functionally, involved in peptide bond synthesis. Stimulates efficient translation and peptide-bond synthesis on native or reconstituted 70S ribosomes in vitro. Probably functions indirectly by altering the affinity of the ribosome for aminoacyl-tRNA, thus increasing their reactivity as acceptors for peptidyl transferase. This chain is Elongation factor P 2 (efp2), found in Lactobacillus johnsonii (strain CNCM I-12250 / La1 / NCC 533).